An 81-amino-acid chain; its full sequence is Putative phytosulfokines 6 (81 aa).

The signal sequence occupies residues 1–20; that stretch reads MKQSLCLAVLFLILSTSSSA. Residues 21–72 constitute a propeptide that is removed on maturation; the sequence is IRRGKEDQEINPLVSATSVEEDSVNKLMGMEYCGEGDEECLRRRMMTESHLD. Sulfotyrosine is present on residues Tyr-73 and Tyr-75. Residues 78 to 81 constitute a propeptide that is removed on maturation; that stretch reads HHKH.

This sequence belongs to the phytosulfokine family. Post-translationally, sulfation is important for activity and for the binding to a putative membrane receptor. In terms of processing, PSK-beta is an enzymatic derivative of PSK-alpha. As to expression, expressed in roots, leaves, stems, flowers and siliques. Most abundant in vascular bundles and in root tips.

It localises to the secreted. Its function is as follows. Promotes plant cell differentiation, organogenesis and somatic embryogenesis as well as cell proliferation. The polypeptide is Putative phytosulfokines 6 (PSK6) (Arabidopsis thaliana (Mouse-ear cress)).